The primary structure comprises 424 residues: Histidinol dehydrogenase (424 aa).

Tyr127, Gln188, and Asn211 together coordinate NAD(+). 3 residues coordinate substrate: Ser234, Gln256, and His259. 2 residues coordinate Zn(2+): Gln256 and His259. Residues Glu322 and His323 each act as proton acceptor in the active site. Residues His323, Asp356, Glu410, and His415 each coordinate substrate. Asp356 lines the Zn(2+) pocket. His415 contributes to the Zn(2+) binding site.

Belongs to the histidinol dehydrogenase family. It depends on Zn(2+) as a cofactor.

It carries out the reaction L-histidinol + 2 NAD(+) + H2O = L-histidine + 2 NADH + 3 H(+). Its pathway is amino-acid biosynthesis; L-histidine biosynthesis; L-histidine from 5-phospho-alpha-D-ribose 1-diphosphate: step 9/9. Its function is as follows. Catalyzes the sequential NAD-dependent oxidations of L-histidinol to L-histidinaldehyde and then to L-histidine. In Methanococcus maripaludis (strain DSM 14266 / JCM 13030 / NBRC 101832 / S2 / LL), this protein is Histidinol dehydrogenase.